The primary structure comprises 266 residues: MIILKLGGSVITRKDSEEPAIDRDNLERIASEIGNASPSSLMIVHGAGSFGHPFAGEYRIGSEIENEEDLRRRRFGFALTQNWVKKLNSHVCDALLAEGIPAVSMQPSAFIRAHAGRISHADISLIRSYLEEGMVPVVYGDVVLDSDRRLKFSVISGDQLINHFSLRLMPERVILGTDVDGVYTRNPKKHPDARLLDVIGSLDDLESLDGTLNTDVTGGMVGKIRELLLLAEKGVESEIINAAVPGNIERALLGEEVRGTRITGKH.

5-9 (KLGGS) contributes to the ATP binding site. Position 47 (alanine 47) interacts with substrate. Glycine 48 is an ATP binding site. Positions 52 and 157 each coordinate substrate. Residues aspartate 178, 183 to 188 (YTRNPK), glycine 219, and lysine 223 each bind ATP.

This sequence belongs to the isopentenyl phosphate kinase family. Homodimer.

It catalyses the reaction isopentenyl phosphate + ATP = isopentenyl diphosphate + ADP. Its function is as follows. Catalyzes the formation of isopentenyl diphosphate (IPP), the building block of all isoprenoids. Has lower activity with dimethylallyl phosphate (DMAP) and isopentenyl thiolophosphate (ISP). Has low activity with 1-butyl phosphate (BP) and 3-buten-1-yl phosphate (BEP). Has no significant activity with geranyl phosphate (in vitro). The sequence is that of Isopentenyl phosphate kinase from Methanothermobacter thermautotrophicus (strain ATCC 29096 / DSM 1053 / JCM 10044 / NBRC 100330 / Delta H) (Methanobacterium thermoautotrophicum).